Reading from the N-terminus, the 357-residue chain is Dynein axonemal assembly factor 10 (357 aa).

4 WD repeats span residues Glu80–Trp127, Ala132–Asn170, Glu184–Thr223, and Glu277–Val321.

Interacts with PIH1D1; the interaction associates DNAAF10 with the R2TP complex. Interacts with several dynein axonemal assembly factors.

It localises to the dynein axonemal particle. Functionally, key assembly factor specifically required for the stability of axonemal dynein heavy chains in cytoplasm. This is Dynein axonemal assembly factor 10 (dnaaf10) from Dictyostelium discoideum (Social amoeba).